The following is a 430-amino-acid chain: Protein trichome birefringence-like 24 (430 aa).

A helical; Signal-anchor for type II membrane protein transmembrane segment spans residues 15–35; that stretch reads VLLIKLISAILISFFAFRLFI. Residues 153–155 carry the GDS motif motif; sequence GDS. The DCXHWCLPGXXDXWN motif signature appears at 406-420; sequence DCLHWCLPGPFDYLN.

This sequence belongs to the PC-esterase family. TBL subfamily.

It is found in the membrane. May act as a bridging protein that binds pectin and other cell wall polysaccharides. Probably involved in maintaining esterification of pectins. May be involved in the specific O-acetylation of cell wall polymers. The chain is Protein trichome birefringence-like 24 (TBL24) from Arabidopsis thaliana (Mouse-ear cress).